The primary structure comprises 357 residues: DNA replication and repair protein RecF (357 aa).

30–37 (GANGSGKT) contributes to the ATP binding site.

This sequence belongs to the RecF family.

Its subcellular location is the cytoplasm. In terms of biological role, the RecF protein is involved in DNA metabolism; it is required for DNA replication and normal SOS inducibility. RecF binds preferentially to single-stranded, linear DNA. It also seems to bind ATP. This is DNA replication and repair protein RecF from Escherichia coli O7:K1 (strain IAI39 / ExPEC).